Reading from the N-terminus, the 216-residue chain is Transcriptional regulatory protein RcsB (216 aa).

Residues 5 to 124 enclose the Response regulatory domain; sequence NVIIADDHPI…DLPKALAALQ (120 aa). Asp56 bears the 4-aspartylphosphate mark. An HTH luxR-type domain is found at 144 to 209; the sequence is GGYGDKRLSP…ALLNYLSSVT (66 aa). Positions 168–187 form a DNA-binding region, H-T-H motif; that stretch reads VTEIAKKLNRSIKTISSQKK.

Belongs to the RcsB family. Interacts with RcsD and RcsA. Phosphorylated and activated by RcsD.

Its function is as follows. Component of the Rcs signaling system, which controls transcription of numerous genes. RcsB is the response regulator that binds to regulatory DNA regions. Can function both in an RcsA-dependent or RcsA-independent manner. In Escherichia coli O157:H7, this protein is Transcriptional regulatory protein RcsB.